Here is a 451-residue protein sequence, read N- to C-terminus: Speckle-type POZ protein homolog (451 aa).

A disordered region spans residues 51 to 75 (EVVSSGSGNSAHGRSISPSPSSASH). A compositionally biased stretch (low complexity) spans 60–75 (SAHGRSISPSPSSASH). In terms of domain architecture, MATH spans 95-225 (KFNYMWTINN…GDRLSIFCEV (131 aa)). Positions 265-338 (SDFTLVCKSD…MYTGQTKYIE (74 aa)) constitute a BTB domain.

Belongs to the Tdpoz family.

It localises to the nucleus. It is found in the nucleus speckle. It functions in the pathway protein modification; protein ubiquitination. Functionally, mediates ubiquitination and proteasomal degradation of target proteins, most likely in complex with cul-3. May promote the degradation of bromodomain-containing proteins such as bet-1. In Caenorhabditis elegans, this protein is Speckle-type POZ protein homolog.